The following is a 143-amino-acid chain: Putative pre-16S rRNA nuclease (143 aa).

It belongs to the YqgF nuclease family.

Its subcellular location is the cytoplasm. Could be a nuclease involved in processing of the 5'-end of pre-16S rRNA. This Agathobacter rectalis (strain ATCC 33656 / DSM 3377 / JCM 17463 / KCTC 5835 / VPI 0990) (Eubacterium rectale) protein is Putative pre-16S rRNA nuclease.